We begin with the raw amino-acid sequence, 325 residues long: MEEMRHAGQISRKLLFYFGSDNYNLSINDSMFRNCTLRADRAAALFGTMLEGVFLGIVLTMMGFFSVKTRFTPSSNIWLFAGCVAIALWLMTKMAQDYAPGPLKCIVTENLALFCSLLGGALNVGMCVDRCRAVYSRMARGSMTPAAICTYIFWAVVGSLLVIAVNALEMSRNGLHMSEGLEGGCFQAASPLAHRAKLVAKFLMYLVFVCIVSVGTALTLVKILNTNLNRKRAICVNVVLVTLPNTFIWLTAMTSAWREFSSYKMCPKIVTGNVFIYLSSVPMLVILFVYMFTGKNLKHTLRPQTRSYSSSTGSASCFAHLAGKP.

7 consecutive transmembrane segments (helical) span residues 45–65 (LFGTMLEGVFLGIVLTMMGFF), 71–91 (FTPSSNIWLFAGCVAIALWLM), 106–126 (IVTENLALFCSLLGGALNVGM), 145–165 (PAAICTYIFWAVVGSLLVIAV), 198–218 (LVAKFLMYLVFVCIVSVGTAL), 233–253 (AICVNVVLVTLPNTFIWLTAM), and 274–294 (VFIYLSSVPMLVILFVYMFTG).

It belongs to the G-protein coupled receptor 1 family.

Its subcellular location is the host membrane. The polypeptide is G-protein coupled receptor E6 (E6) (Equus caballus (Horse)).